The following is a 198-amino-acid chain: Guanylate kinase (198 aa).

N-acetylglycine is present on Gly2. Residues 4 to 186 form the Guanylate kinase-like domain; the sequence is PRPVVLSGPS…AYWALKEALS (183 aa). 14–19 contributes to the ATP binding site; the sequence is GAGKST. Residue 37–51 participates in substrate binding; that stretch reads SHTTRDPRPGEENGK. Active-site residues include Arg44, Arg137, and Arg148. An ATP-binding site is contributed by 171–172; the sequence is ND.

Belongs to the guanylate kinase family. As to quaternary structure, monomer. Interacts with RD3.

It localises to the photoreceptor inner segment. Its subcellular location is the cytoplasm. The protein resides in the cytosol. It catalyses the reaction GMP + ATP = GDP + ADP. Up-regulated by RD3. Catalyzes the phosphorylation of GMP to GDP. Essential enzyme for recycling GMP and indirectly, cyclic GMP (cGMP). Involved in the cGMP metabolism in photoreceptors. This chain is Guanylate kinase (GUK1), found in Sus scrofa (Pig).